A 422-amino-acid chain; its full sequence is Glutamate-1-semialdehyde 2,1-aminomutase (422 aa).

K264 carries the N6-(pyridoxal phosphate)lysine modification.

This sequence belongs to the class-III pyridoxal-phosphate-dependent aminotransferase family. HemL subfamily. Homodimer. The cofactor is pyridoxal 5'-phosphate.

Its subcellular location is the cytoplasm. It carries out the reaction (S)-4-amino-5-oxopentanoate = 5-aminolevulinate. Its pathway is porphyrin-containing compound metabolism; protoporphyrin-IX biosynthesis; 5-aminolevulinate from L-glutamyl-tRNA(Glu): step 2/2. This is Glutamate-1-semialdehyde 2,1-aminomutase from Clostridium tetani (strain Massachusetts / E88).